Here is a 303-residue protein sequence, read N- to C-terminus: Probable 5-dehydro-4-deoxyglucarate dehydratase (303 aa).

The protein belongs to the DapA family.

It catalyses the reaction 5-dehydro-4-deoxy-D-glucarate + H(+) = 2,5-dioxopentanoate + CO2 + H2O. The protein operates within carbohydrate acid metabolism; D-glucarate degradation; 2,5-dioxopentanoate from D-glucarate: step 2/2. The polypeptide is Probable 5-dehydro-4-deoxyglucarate dehydratase (Polaromonas naphthalenivorans (strain CJ2)).